We begin with the raw amino-acid sequence, 303 residues long: Glycine--tRNA ligase alpha subunit (303 aa).

The protein belongs to the class-II aminoacyl-tRNA synthetase family. In terms of assembly, tetramer of two alpha and two beta subunits.

It is found in the cytoplasm. The catalysed reaction is tRNA(Gly) + glycine + ATP = glycyl-tRNA(Gly) + AMP + diphosphate. The protein is Glycine--tRNA ligase alpha subunit of Klebsiella pneumoniae (strain 342).